We begin with the raw amino-acid sequence, 1135 residues long: Envelopment polyprotein (1135 aa).

Positions 1–18 (MGIWKWLVMASLVWPVLT) are cleaved as a signal peptide. The Lumenal portion of the chain corresponds to 19-485 (LRNVYDMKIE…VPGFHGWATA (467 aa)). 11 disulfides stabilise this stretch: Cys29-Cys151, Cys63-Cys157, Cys109-Cys128, Cys133-Cys138, Cys175-Cys185, Cys210-Cys247, Cys234-Cys351, Cys376-Cys435, Cys380-Cys389, Cys405-Cys424, and Cys452-Cys475. N-linked (GlcNAc...) asparagine; by host glycosylation is present at Asn134. 2 N-linked (GlcNAc...) asparagine; by host glycosylation sites follow: Asn235 and Asn347. The N-linked (GlcNAc...) asparagine; by host glycan is linked to Asn399. A helical membrane pass occupies residues 486–506 (ALLVTFCFGWVLIPAITFIIL). Topologically, residues 507–627 (TVLKFIANIF…LNLFRYKSRC (121 aa)) are cytoplasmic. Residues 516 to 533 (FHTSNQENRLKSVLRKIK) form a binding to the ribonucleoprotein region. 2 CCHC-type zinc fingers span residues 545–565 (CDVC…GVSC) and 570–591 (CPYC…YKVC). Binding to the ribonucleoprotein regions lie at residues 588-605 (YKVC…KKTV), 592-603 (QVTHRFRDDLKK), and 611-625 (TPGC…RYKS). The region spanning 611–634 (TPGCYRTLNLFRYKSRCYIFTMWI) is the ITAM domain. The short motif at 615–618 (YRTL) is the YxxL element. A helical transmembrane segment spans residues 628-648 (YIFTMWIFLLVLESILWAASA). Residues 649 to 1105 (SETPLTPVWN…EWISGIFSGN (457 aa)) are Lumenal-facing. Intrachain disulfides connect Cys735–Cys770, Cys739–Cys777, Cys751–Cys885, Cys765–Cys896, Cys780–Cys904, Cys806–Cys815, Cys823–Cys832, and Cys863–Cys867. The interval 757 to 777 (YQYETSWGCNPSDCPGVGTGC) is fusion loop. Asn928 carries an N-linked (GlcNAc...) asparagine; by host glycan. 5 disulfide bridges follow: Cys970-Cys1000, Cys993-Cys1045, Cys1010-Cys1015, Cys1046-Cys1051, and Cys1085-Cys1089. A helical membrane pass occupies residues 1106–1126 (WIVLIVLCVFLLFSLVLLSIL). The binding to the ribonucleoprotein stretch occupies residues 1122–1135 (LLSILCPVRKHKKS). Residues 1127–1135 (CPVRKHKKS) lie on the Cytoplasmic side of the membrane.

This sequence belongs to the hantavirus envelope glycoprotein family. In terms of assembly, homodimer. Homotetramer; forms heterotetrameric Gn-Gc spikes in the pre-fusion conformation. Interacts (via C-terminus) with the nucleoprotein. Interacts with host TUFM; this interaction contributes to the virus-induced degradation of mitochondria by autophagy, which leads to degradation of host MAVS and inhibition of type I interferon (IFN) responses. Interacts with host MAP1LC3B; this interaction contributes to the virus-induced degradation of mitochondria by autophagy, which leads to degradation of host MAVS and inhibition of type I interferon (IFN) responses. As to quaternary structure, homotetramer; forms heterotetrameric Gn-Gc spikes in the pre-fusion conformation. Homotrimer; forms homotrimer in the post-fusion conformation at acidic pH. Interacts (via C-terminus) with the nucleoprotein. In terms of processing, specific enzymatic cleavage in vivo yield the mature proteins Glycoprotein N and Glycoprotein C.

The protein resides in the virion membrane. Its subcellular location is the host cell surface. The protein localises to the host Golgi apparatus membrane. It is found in the host endoplasmic reticulum membrane. It localises to the host mitochondrion. Functionally, forms homotetramers with glycoprotein C at the surface of the virion. Attaches the virion to host cell receptors including integrin ITGAV/ITGB3. This attachment induces virion internalization predominantly through clathrin-dependent endocytosis. May also bind to host C1QBP for virus entry into the host cell. Mediates the assembly and budding of infectious virus particles through its interaction with the nucleocapsid protein and the viral genome. May dysregulate normal immune and endothelial cell responses through an ITAM motif. Translocates to mitochondria, binds to host TUFM and recruits MAP1LC3B. These interactions induce mitochondrial autophagy and therefore destruction of host MAVS leading to inhibition of type I interferon (IFN) responses. Concomitant breakdown of glycoprotein N is apparently prevented by the nucleoprotein that may inhibit Gn-stimulated autophagosome-lysosome fusion. Interacts with the viral genomic RNA. Homodimer. Homotetramer; forms heterotetrameric Gn-Gc spikes in the pre-fusion conformation. Attaches the virion to host cell receptors including integrin ITGAV/ITGB3. This attachment induces virion internalization predominantly through clathrin-dependent endocytosis. May also bind to host C1QBP for virus entry into the host cell. Class II fusion protein that promotes fusion of viral membrane with host endosomal membrane after endocytosis of the virion. This is Envelopment polyprotein (GP) from Apodemus agrarius (Eurasian field mouse).